Here is an 802-residue protein sequence, read N- to C-terminus: Bifunctional purine biosynthetic protein ADE5,7 (802 aa).

The GARS stretch occupies residues 1–444; the sequence is MPEITAFPQP…FRRDIAYRAL (444 aa). The ATP-grasp domain maps to 126–339; that stretch reads KEFMARHNIP…LAEVLLACVE (214 aa). 157-218 lines the ATP pocket; that stretch reads KPFTSGRSVI…EEYLSGPEIS (62 aa). Mg(2+)-binding residues include Glu-307 and Asn-309. Residues 455-788 are AIRS; sequence LTYAAAGVSV…EAWVIGEVQE (334 aa).

It in the N-terminal section; belongs to the GARS family. This sequence in the C-terminal section; belongs to the AIR synthase family. Homodimer. Mg(2+) is required as a cofactor. Mn(2+) serves as cofactor.

It localises to the cytoplasm. The protein resides in the cytosol. It carries out the reaction 2-formamido-N(1)-(5-O-phospho-beta-D-ribosyl)acetamidine + ATP = 5-amino-1-(5-phospho-beta-D-ribosyl)imidazole + ADP + phosphate + H(+). The enzyme catalyses 5-phospho-beta-D-ribosylamine + glycine + ATP = N(1)-(5-phospho-beta-D-ribosyl)glycinamide + ADP + phosphate + H(+). It functions in the pathway purine metabolism; IMP biosynthesis via de novo pathway; 5-amino-1-(5-phospho-D-ribosyl)imidazole from N(2)-formyl-N(1)-(5-phospho-D-ribosyl)glycinamide: step 2/2. The protein operates within purine metabolism; IMP biosynthesis via de novo pathway; N(1)-(5-phospho-D-ribosyl)glycinamide from 5-phospho-alpha-D-ribose 1-diphosphate: step 2/2. Its function is as follows. Catalyzes the second and fifth step in the 'de novo' purine biosynthesis pathway; contains phosphoribosylamine--glycine ligase (GARS) and phosphoribosylformylglycinamidine cyclo-ligase (AIRS) activities. In Cryptococcus neoformans var. grubii serotype A (strain H99 / ATCC 208821 / CBS 10515 / FGSC 9487) (Filobasidiella neoformans var. grubii), this protein is Bifunctional purine biosynthetic protein ADE5,7.